A 199-amino-acid polypeptide reads, in one-letter code: Recombination protein RecR (199 aa).

Residues 58 to 73 form a C4-type zinc finger; that stretch reads CKKCFNLTSEEECDIC. Residues 81-175 form the Toprim domain; it reads NIICVVAETK…KVTRIAYGLP (95 aa).

This sequence belongs to the RecR family.

In terms of biological role, may play a role in DNA repair. It seems to be involved in an RecBC-independent recombinational process of DNA repair. It may act with RecF and RecO. In Prochlorococcus marinus (strain MIT 9515), this protein is Recombination protein RecR.